The sequence spans 253 residues: Acidic endochitinase Q (253 aa).

An N-terminal signal peptide occupies residues 1–24 (MEFSGSPMALFCCVFFLFLTGSLA). The active-site Proton donor is the E92. Cysteines 212 and 244 form a disulfide.

Belongs to the glycosyl hydrolase 19 family. Chitinase class I subfamily.

It is found in the secreted. The enzyme catalyses Random endo-hydrolysis of N-acetyl-beta-D-glucosaminide (1-&gt;4)-beta-linkages in chitin and chitodextrins.. Its function is as follows. Defense against chitin-containing fungal pathogens. The polypeptide is Acidic endochitinase Q (Nicotiana tabacum (Common tobacco)).